The primary structure comprises 446 residues: Argininosuccinate lyase (446 aa).

It belongs to the lyase 1 family. Argininosuccinate lyase subfamily.

It is found in the cytoplasm. It carries out the reaction 2-(N(omega)-L-arginino)succinate = fumarate + L-arginine. It functions in the pathway amino-acid biosynthesis; L-arginine biosynthesis; L-arginine from L-ornithine and carbamoyl phosphate: step 3/3. The protein is Argininosuccinate lyase of Bacteroides thetaiotaomicron (strain ATCC 29148 / DSM 2079 / JCM 5827 / CCUG 10774 / NCTC 10582 / VPI-5482 / E50).